The primary structure comprises 81 residues: uncharacterized protein (81 aa).

This sequence to M.thermoautotrophicum MTH886.

This is an uncharacterized protein from Methanocaldococcus jannaschii (strain ATCC 43067 / DSM 2661 / JAL-1 / JCM 10045 / NBRC 100440) (Methanococcus jannaschii).